A 239-amino-acid chain; its full sequence is Seed lectin beta chain (239 aa).

Asp-88 and Gly-106 together coordinate D-glucose. Residues Glu-126 and Asp-128 each contribute to the Mn(2+) site. Ca(2+) contacts are provided by Asp-128, Asn-132, and Asp-137. Positions 137 and 142 each coordinate Mn(2+). The D-glucose site is built by Gly-217 and Ala-218.

This sequence belongs to the leguminous lectin family. Tetramer consisting of heterodimers of alpha and beta chains.

Functionally, galactose-binding lectin. Agglutinates human erythrocytes, and requires Ca(2+) and Mn(2+) ions for full agglutinating activity. Has antifungal activity against Fusarium sp., A.niger and A.flavus. The polypeptide is Seed lectin beta chain (Spatholobus parviflorus (Butea parviflora)).